Consider the following 177-residue polypeptide: N-acetylmuramoyl-L-alanine amidase A (177 aa).

Residues Gln-23–Gly-158 enclose the N-acetylmuramoyl-L-alanine amidase domain. Cys-114 and Cys-121 form a disulfide bridge.

Its subcellular location is the secreted. It carries out the reaction Hydrolyzes the link between N-acetylmuramoyl residues and L-amino acid residues in certain cell-wall glycopeptides.. Antibacterial activity against Gram-positive bacteria M.luteus, S.aureus, E.faecalis and P.acidilactici and Gram-negative bacterium E.coli. The sequence is that of N-acetylmuramoyl-L-alanine amidase A (cwhA) from Achromobacter lyticus.